Here is a 267-residue protein sequence, read N- to C-terminus: Apolipoprotein A-I (267 aa).

The first 18 residues, 1-18 (MKAAVLTLAVLFLTGSQA), serve as a signal peptide directing secretion. 2 tandem repeats follow at residues 68 to 89 (LKLL…EQLG) and 90 to 111 (PVTQ…QEMS). The 10 X approximate tandem repeats stretch occupies residues 68 to 267 (LKLLDNWDSV…EEYTKKLNTQ (200 aa)). M110 bears the Methionine sulfoxide mark. One copy of the 3; half-length repeat lies at 112–122 (KDLEEVKAKVQ). A run of 5 repeats spans residues 123–144 (PYLD…QKVE), 145–166 (PLRA…EKLS), 167–188 (PLGE…THLA), 189–210 (PYSD…ENGG), and 211–232 (ARLA…EKAK). Position 136 is a methionine sulfoxide (M136). One copy of the 9; half-length repeat lies at 233-243 (PALEDLRQGLL). Repeat unit 10 spans residues 244–267 (PVLESFKVSFLSALEEYTKKLNTQ).

It belongs to the apolipoprotein A1/A4/E family. As to quaternary structure, homodimer. Interacts with APOA1BP and CLU. Component of a sperm activating protein complex (SPAP), consisting of APOA1, an immunoglobulin heavy chain, an immunoglobulin light chain and albumin. Interacts with NDRG1. Interacts with SCGB3A2. Interacts with NAXE and YJEFN3. Post-translationally, glycosylated. In terms of processing, palmitoylated. Phosphorylation sites are present in the extracellular medium. As to expression, major protein of plasma HDL, also found in chylomicrons.

It localises to the secreted. Participates in the reverse transport of cholesterol from tissues to the liver for excretion by promoting cholesterol efflux from tissues and by acting as a cofactor for the lecithin cholesterol acyltransferase (LCAT). As part of the SPAP complex, activates spermatozoa motility. In Pan troglodytes (Chimpanzee), this protein is Apolipoprotein A-I (APOA1).